Consider the following 300-residue polypeptide: 17-beta-hydroxysteroid dehydrogenase 13 (300 aa).

The first 19 residues, 1 to 19, serve as a signal peptide directing secretion; it reads MNLILELLLLVGIIIYSYL. Phosphoserine is present on S33. An NAD(+)-binding site is contributed by 40–67; it reads LITGAGHGIGRLTAYEFAKQKSRLVLWD. S69 bears the Phosphoserine mark. K79 carries the post-translational modification N6-acetyllysine. Position 172 (S172) interacts with substrate. The active-site Proton acceptor is Y185. K189 lines the NAD(+) pocket.

This sequence belongs to the short-chain dehydrogenases/reductases (SDR) family.

It is found in the lipid droplet. It localises to the endoplasmic reticulum. It catalyses the reaction 17beta-estradiol + NAD(+) = estrone + NADH + H(+). The enzyme catalyses all-trans-retinol + NAD(+) = all-trans-retinal + NADH + H(+). The catalysed reaction is all-trans-retinal + NAD(+) + H2O = all-trans-retinoate + NADH + 2 H(+). Plays a pivotal role in hepatic lipid metabolism. In vitro, it catalyzes the oxidation of a variety of lipid substrates, including 17beta-estradiol, retinol, retinal, and leukotriene B4. This Rattus norvegicus (Rat) protein is 17-beta-hydroxysteroid dehydrogenase 13 (Hsd17b13).